The sequence spans 290 residues: Small ribosomal subunit biogenesis GTPase RsgA (290 aa).

One can recognise a CP-type G domain in the interval 62-219 (DNYLIRPQVA…VVDTPGFSTL (158 aa)). Residues 111–114 (NKID) and 162–170 (GPSGVGKST) contribute to the GTP site. Zn(2+) is bound by residues Cys-243, Cys-248, His-250, and Cys-256.

The protein belongs to the TRAFAC class YlqF/YawG GTPase family. RsgA subfamily. Monomer. Associates with 30S ribosomal subunit, binds 16S rRNA. Zn(2+) is required as a cofactor.

The protein resides in the cytoplasm. Functionally, one of several proteins that assist in the late maturation steps of the functional core of the 30S ribosomal subunit. Helps release RbfA from mature subunits. May play a role in the assembly of ribosomal proteins into the subunit. Circularly permuted GTPase that catalyzes slow GTP hydrolysis, GTPase activity is stimulated by the 30S ribosomal subunit. This Clostridium novyi (strain NT) protein is Small ribosomal subunit biogenesis GTPase RsgA.